The chain runs to 306 residues: Putative HTH-type transcriptional regulatory protein Mhun_2548 (306 aa).

The region spanning 132–189 is the HTH cro/C1-type domain; that stretch reads LRELRETRSLSLGDLGQILGVSRRTVAKYEAGMGTTIEIALRIEETFDSGVIEPIDLI. The segment at residues 143 to 162 is a DNA-binding region (H-T-H motif); the sequence is LGDLGQILGVSRRTVAKYEA.

The chain is Putative HTH-type transcriptional regulatory protein Mhun_2548 from Methanospirillum hungatei JF-1 (strain ATCC 27890 / DSM 864 / NBRC 100397 / JF-1).